The chain runs to 176 residues: MKIIAKKDLFINDEIRVREVRLVGLEGEQLGIKPLSEAQAIADAANVDLVLIQPQAVPPVAKIMDYGKFKFEFQKKQKEQRKKQSVVTVKEVRLSPVIDKGDFETKLRNGRKFLEKGNKVKVSIRFKGRMITHKEIGAKVLAEFAEATQDIAIIEQRAKMDGRQMFMQLAPISDKK.

This sequence belongs to the IF-3 family. In terms of assembly, monomer.

It localises to the cytoplasm. Its function is as follows. IF-3 binds to the 30S ribosomal subunit and shifts the equilibrium between 70S ribosomes and their 50S and 30S subunits in favor of the free subunits, thus enhancing the availability of 30S subunits on which protein synthesis initiation begins. This chain is Translation initiation factor IF-3, found in Streptococcus uberis (strain ATCC BAA-854 / 0140J).